The sequence spans 285 residues: Hypersensitive-induced response protein 3 (285 aa).

The N-myristoyl glycine moiety is linked to residue Gly2. 2 coiled-coil regions span residues 113–139 (NLDDVFEQKNEIAKSVEEELDKAMTAY) and 165–185 (NAAARMRVAASEKAEAEKIIQ).

Self-interacts and forms heteromers. Interacts with NB-LRR class of R proteins before R proteins (e.g. RPS2 or RPM1) are activated by the effectors.

Its subcellular location is the cell membrane. This Arabidopsis thaliana (Mouse-ear cress) protein is Hypersensitive-induced response protein 3 (HIR3).